The primary structure comprises 501 residues: Cytochrome P450 2S1 (501 aa).

Residue cysteine 441 participates in heme binding.

The protein belongs to the cytochrome P450 family. Heme is required as a cofactor.

The protein localises to the endoplasmic reticulum membrane. It localises to the microsome membrane. The catalysed reaction is all-trans-retinoate + reduced [NADPH--hemoprotein reductase] + O2 = all-trans-5,6-epoxyretinoate + oxidized [NADPH--hemoprotein reductase] + H2O + H(+). It carries out the reaction all-trans-retinoate + reduced [NADPH--hemoprotein reductase] + O2 = all-trans-4-hydroxyretinoate + oxidized [NADPH--hemoprotein reductase] + H2O + H(+). The enzyme catalyses (5S)-hydroperoxy-(6E,8Z,11Z,14Z)-eicosatetraenoate = 5-oxo-(6E,8Z,11Z,14Z)-eicosatetraenoate + H2O. It catalyses the reaction (12S)-hydroperoxy-(5Z,8Z,10E,14Z)-eicosatetraenoate = 12-oxo-(5Z,8Z,10E,14Z)-eicosatetraenoate + H2O. The catalysed reaction is (15S)-hydroperoxy-(5Z,8Z,11Z,13E)-eicosatetraenoate = 15-oxo-(5Z,8Z,11Z,13E)-eicosatetraenoate + H2O. It carries out the reaction prostaglandin H2 = thromboxane A2. The enzyme catalyses prostaglandin H2 = (12S)-hydroxy-(5Z,8E,10E)-heptadecatrienoate + malonaldehyde. It catalyses the reaction (13S)-hydroperoxy-(9Z,11E)-octadecadienoate = 13-oxo-(9Z,11E)-octadecadienoate + H2O. The protein operates within lipid metabolism; fatty acid metabolism. A cytochrome P450 monooxygenase involved in the metabolism of retinoids and eicosanoids. In epidermis, may contribute to the oxidative metabolism of all-trans-retinoic acid. For this activity, uses molecular oxygen inserting one oxygen atom into a substrate, and reducing the second into a water molecule, with two electrons provided by NADPH via cytochrome P450 reductase (NADPH--hemoprotein reductase). Additionally, displays peroxidase and isomerase activities toward various oxygenated eicosanoids such as prostaglandin H2 (PGH2) and hydroperoxyeicosatetraenoates (HPETEs). Independently of cytochrome P450 reductase, NADPH, and O2, catalyzes the breakdown of PGH2 to hydroxyheptadecatrienoic acid (HHT) and malondialdehyde (MDA), which is known to act as a mediator of DNA damage. This Mus musculus (Mouse) protein is Cytochrome P450 2S1 (Cyp2s1).